Reading from the N-terminus, the 252-residue chain is Small ribosomal subunit protein uS2A (252 aa).

S2 is subject to N-acetylserine. Positions 209–252 (EVEQQAAEETTSTGADAEESKEEVAEGQNEASEWAEENTEAVSW) are disordered. Positions 241–252 (EWAEENTEAVSW) are enriched in acidic residues.

Belongs to the universal ribosomal protein uS2 family. Component of the small ribosomal subunit. Mature ribosomes consist of a small (40S) and a large (60S) subunit. The 40S subunit contains about 33 different proteins and 1 molecule of RNA (18S). The 60S subunit contains about 49 different proteins and 3 molecules of RNA (25S, 5.8S and 5S). Interacts with RPS21.

The protein localises to the cytoplasm. Functionally, required for the assembly and/or stability of the 40S ribosomal subunit. Required for the processing of the 20S rRNA-precursor to mature 18S rRNA in a late step of the maturation of 40S ribosomal subunits. The chain is Small ribosomal subunit protein uS2A from Vanderwaltozyma polyspora (strain ATCC 22028 / DSM 70294 / BCRC 21397 / CBS 2163 / NBRC 10782 / NRRL Y-8283 / UCD 57-17) (Kluyveromyces polysporus).